A 1249-amino-acid polypeptide reads, in one-letter code: Protein lingerer (1249 aa).

Positions methionine 1 to glutamate 66 are disordered. Gly residues-rich tracts occupy residues serine 7–glycine 30 and glycine 38–glycine 50. The region spanning lysine 84–threonine 124 is the UBA domain. Disordered stretches follow at residues threonine 132 to glutamate 312, serine 350 to valine 375, methionine 454 to threonine 506, tyrosine 549 to methionine 579, threonine 616 to serine 717, proline 738 to isoleucine 922, glycine 1016 to glycine 1042, glutamine 1124 to methionine 1149, lysine 1164 to threonine 1186, and glutamine 1211 to asparagine 1249. Gly residues predominate over residues asparagine 186–aspartate 209. The span at glycine 210 to glycine 227 shows a compositional bias: basic and acidic residues. Composition is skewed to gly residues over residues glutamate 228–glycine 240 and aspartate 248–arginine 269. A compositionally biased stretch (low complexity) spans serine 350–proline 369. Polar residues predominate over residues methionine 457–proline 494. Low complexity-rich tracts occupy residues tyrosine 549–valine 559, threonine 616–valine 639, and glutamine 647–glutamine 664. Residues alanine 678 to arginine 705 are compositionally biased toward polar residues. Residues threonine 706–serine 717 show a composition bias toward low complexity. 2 stretches are compositionally biased toward polar residues: residues proline 738–tyrosine 769 and glycine 777–alanine 809. Over residues glutamine 811–serine 861 the composition is skewed to low complexity. The segment covering glutamine 862–proline 873 has biased composition (polar residues). 3 stretches are compositionally biased toward low complexity: residues serine 874–asparagine 884, asparagine 892–isoleucine 922, and asparagine 1023–serine 1034. Polar residues predominate over residues glutamine 1124 to glycine 1138. Positions aspartate 1216–asparagine 1249 are enriched in polar residues.

The protein localises to the cytoplasm. Acts in the nervous system to mediate the control of copulatory organs during courtship. The sequence is that of Protein lingerer from Anopheles gambiae (African malaria mosquito).